A 669-amino-acid polypeptide reads, in one-letter code: L-type lectin-domain containing receptor kinase IV.4 (669 aa).

Positions 1 to 23 are cleaved as a signal peptide; it reads MFFIKLFTIFFLSFFWQSLKSSS. The Extracellular portion of the chain corresponds to 24 to 294; it reads QIIDFTYNGF…TRVYRFYKNW (271 aa). The tract at residues 26–260 is legume-lectin like; sequence IDFTYNGFRP…SEIFVLGWSF (235 aa). Asn58, Asn80, Asn127, Asn152, and Asn185 each carry an N-linked (GlcNAc...) asparagine glycan. Residues 295-315 traverse the membrane as a helical segment; that stretch reads VPLISLLLIPFLLIIFLVRFI. At 316–669 the chain is on the cytoplasmic side; the sequence is MKRRRKFAEE…VAYSLLSSGR (354 aa). In terms of domain architecture, Protein kinase spans 350–627; that stretch reads FKDKNILGSG…LQYLRGDAML (278 aa). Residues 356 to 364 and Lys379 contribute to the ATP site; that span reads LGSGGFGSV. The Proton acceptor role is filled by Asp475.

The protein in the C-terminal section; belongs to the protein kinase superfamily. Ser/Thr protein kinase family. It in the N-terminal section; belongs to the leguminous lectin family.

It is found in the cell membrane. The catalysed reaction is L-seryl-[protein] + ATP = O-phospho-L-seryl-[protein] + ADP + H(+). It catalyses the reaction L-threonyl-[protein] + ATP = O-phospho-L-threonyl-[protein] + ADP + H(+). In terms of biological role, involved in resistance response to the pathogenic oomycetes Phytophthora infestans and Phytophthora capsici and to the pathogenic bacteria Pseudomonas syringae. The chain is L-type lectin-domain containing receptor kinase IV.4 from Arabidopsis thaliana (Mouse-ear cress).